The chain runs to 485 residues: GTPase Obg (485 aa).

The Obg domain maps to 2 to 159 (PRFVDRVVIH…RELTLELKTV (158 aa)). The OBG-type G domain occupies 160 to 341 (ADVGLIGFPS…FIFALWDMVR (182 aa)). Residues 166 to 173 (GFPSAGKS), 191 to 195 (FTTLV), 212 to 215 (DVPG), 292 to 295 (NKID), and 322 to 324 (STV) each bind GTP. Ser-173 and Thr-193 together coordinate Mg(2+). The 79-residue stretch at 359-437 (PIAVDETGFS…IGDMTFDWEP (79 aa)) folds into the OCT domain. Positions 439–485 (TPAGVDVQMSGRGTDTRLEQTDRVSAAERKIARRERRQSTDEPGGEE) are disordered. Residues 452 to 468 (TDTRLEQTDRVSAAERK) show a composition bias toward basic and acidic residues.

The protein belongs to the TRAFAC class OBG-HflX-like GTPase superfamily. OBG GTPase family. Monomer. Mg(2+) serves as cofactor.

It localises to the cytoplasm. Functionally, an essential GTPase which binds GTP, GDP and possibly (p)ppGpp with moderate affinity, with high nucleotide exchange rates and a fairly low GTP hydrolysis rate. Plays a role in control of the cell cycle, stress response, ribosome biogenesis and in those bacteria that undergo differentiation, in morphogenesis control. The sequence is that of GTPase Obg from Mycobacterium sp. (strain MCS).